The primary structure comprises 1049 residues: Protein phosphatase 1 regulatory subunit 12A (1049 aa).

6 ANK repeats span residues 39 to 68 (DDGAVFLAACSSGDTEEVLRMLDRGADINY), 72 to 101 (DGLTALHQACIDDNVDMVTFLVEHGACINQ), 105 to 134 (EGWIPLHAAASCGYLDIAEYLISQGASVGV), 138 to 164 (EGETPLDIAEEEAMEELLQNEINRQGV), 198 to 227 (SGGTALHVAAAKGYAEVLKLLIQAGYDVNI), and 231 to 260 (DGWTPLHAAAHWGKEEACRILVEHLCDMDV). The segment at 302–947 (LIETTTTGDN…RPYSRFEKDD (646 aa)) is disordered. The span at 303 to 315 (IETTTTGDNNQSV) shows a compositional bias: polar residues. Residues 319–341 (KSKETLLLEPEKTAPRIETLEPE) show a composition bias toward basic and acidic residues. Residues 359 to 371 (SEEEEEEDSESEN) show a composition bias toward acidic residues. Residues 378 to 421 (SSVPSSVSNSTPTTAPSSITVTSPTTPSNQVTTPTSPTKKVSTP) show a composition bias toward low complexity. The segment covering 426–436 (SPKEEDRKDES) has biased composition (basic and acidic residues). The segment covering 473-484 (RSASSPRLSSSL) has biased composition (low complexity). Residues 485–497 (DNKDKEKEKEKTR) show a composition bias toward basic and acidic residues. Residues 545–564 (SDGTASTNRTSSYQRSTSHT) are compositionally biased toward polar residues. The segment covering 571–592 (SSSRDLPAKSSSASSLEPNNSK) has biased composition (low complexity). Positions 593-607 (AWQPSSYYQSYSIHR) are enriched in polar residues. Over residues 620–639 (SSTSSSTTTTTTTSSVTSPT) the composition is skewed to low complexity. Basic and acidic residues predominate over residues 649-664 (WAEESAEKEKEKEKES). Low complexity predominate over residues 665-686 (ATVIPTINTAGTTTTTSTTGTV). The span at 702-711 (VRDEESESQR) shows a compositional bias: basic and acidic residues. Positions 712 to 722 (KARSRQARQSR) are enriched in basic residues. Residues 747 to 789 (RPREDEKEEKEKQDKEKQEEKKETETKEDDYRSRYRSFEEKYR) show a composition bias toward basic and acidic residues. Low complexity predominate over residues 790–819 (TSLASSTTASSTIPSSSSSSSSSLYSTSSL). A compositionally biased stretch (polar residues) spans 820–829 (NRPNSLTGLT). Residues 835–863 (STRDTDRESDRKEKDEDRDGDDKSQPRSI) show a composition bias toward basic and acidic residues. Residues 864 to 875 (RDRRRPREKRRS) are compositionally biased toward basic residues. Basic and acidic residues-rich tracts occupy residues 890–906 (PDHPSDSEGSTKGEPQS) and 934–947 (GESRRPYSRFEKDD).

PP1 comprises a catalytic subunit, and one or several targeting or regulatory subunits. Ppp1r12a mediates binding to myosin.

It localises to the cytoplasm. Functionally, regulates myosin phosphatase activity. This is Protein phosphatase 1 regulatory subunit 12A (ppp1r12a) from Danio rerio (Zebrafish).